The following is a 35-amino-acid chain: Photosystem II reaction center protein T (35 aa).

A helical transmembrane segment spans residues 3 to 23; sequence ALVYTFLLVSTLGIIFFAIFF.

This sequence belongs to the PsbT family. PSII is composed of 1 copy each of membrane proteins PsbA, PsbB, PsbC, PsbD, PsbE, PsbF, PsbH, PsbI, PsbJ, PsbK, PsbL, PsbM, PsbT, PsbY, PsbZ, Psb30/Ycf12, at least 3 peripheral proteins of the oxygen-evolving complex and a large number of cofactors. It forms dimeric complexes.

The protein resides in the plastid. Its subcellular location is the chloroplast thylakoid membrane. In terms of biological role, found at the monomer-monomer interface of the photosystem II (PS II) dimer, plays a role in assembly and dimerization of PSII. PSII is a light-driven water plastoquinone oxidoreductase, using light energy to abstract electrons from H(2)O, generating a proton gradient subsequently used for ATP formation. The protein is Photosystem II reaction center protein T of Citrus sinensis (Sweet orange).